A 184-amino-acid polypeptide reads, in one-letter code: Photosystem I assembly protein Ycf4 (184 aa).

2 helical membrane-spanning segments follow: residues 22 to 42 (FCWA…GISS) and 57 to 77 (ILFF…LFIS).

Belongs to the Ycf4 family.

Its subcellular location is the plastid. The protein localises to the chloroplast thylakoid membrane. Seems to be required for the assembly of the photosystem I complex. This Illicium oligandrum (Star anise) protein is Photosystem I assembly protein Ycf4.